We begin with the raw amino-acid sequence, 874 residues long: Cellulose synthase catalytic subunit [UDP-forming] (874 aa).

The next 4 membrane-spanning stretches (helical) occupy residues 30-50 (SPFS…VFPL), 151-171 (ILGV…TQPF), 173-193 (PLSQ…VRRM), and 230-250 (LVCG…LVLG). Residues 271-364 (QWPTVDIFVP…FVAIFDCDHV (94 aa)) form a catalytic subdomain A region. Asp313 is an active-site residue. Substrate is bound by residues Asp360 and Asp362. Positions 441–501 (KPLDEIGGIA…GQRIRWARGM (61 aa)) are catalytic subdomain B. Asp457 is a catalytic residue. 5 consecutive transmembrane segments (helical) span residues 525-545 (LNAM…TAPL), 547-567 (FLLL…LFVI), 592-612 (IYET…LINP), 634-654 (VISR…AAGV), and 668-688 (VIVS…AVAV). Residues 694-790 (QVRRAHRVEI…QHIDFVQCTF (97 aa)) enclose the PilZ domain. The chain crosses the membrane as a helical span at residues 833-853 (SVKVIFRSLTALIAWIVSFIP).

It belongs to the glycosyltransferase 2 family. It depends on Mg(2+) as a cofactor.

It localises to the cell inner membrane. The catalysed reaction is [(1-&gt;4)-beta-D-glucosyl](n) + UDP-alpha-D-glucose = [(1-&gt;4)-beta-D-glucosyl](n+1) + UDP + H(+). Its pathway is glycan metabolism; bacterial cellulose biosynthesis. Its activity is regulated as follows. Activated by bis-(3'-5') cyclic diguanylic acid (c-di-GMP). Its function is as follows. Catalytic subunit of cellulose synthase. It polymerizes uridine 5'-diphosphate glucose to cellulose, which is produced as an extracellular component for mechanical and chemical protection at the onset of the stationary phase, when the cells exhibit multicellular behavior (rdar morphotype). Coexpression of cellulose and thin aggregative fimbriae leads to a hydrophobic network with tightly packed cells embedded in a highly inert matrix. This is Cellulose synthase catalytic subunit [UDP-forming] (bcsA) from Salmonella typhi.